Consider the following 270-residue polypeptide: Diaminopimelate epimerase (270 aa).

Residues Asn-15, Gln-49, and Asn-66 each contribute to the substrate site. Catalysis depends on Cys-75, which acts as the Proton donor. Residues 76-77 (GN), Asn-155, Asn-187, and 204-205 (ER) each bind substrate. Cys-213 functions as the Proton acceptor in the catalytic mechanism. A substrate-binding site is contributed by 214–215 (GS).

It belongs to the diaminopimelate epimerase family. As to quaternary structure, homodimer.

The protein localises to the cytoplasm. The catalysed reaction is (2S,6S)-2,6-diaminopimelate = meso-2,6-diaminopimelate. Its pathway is amino-acid biosynthesis; L-lysine biosynthesis via DAP pathway; DL-2,6-diaminopimelate from LL-2,6-diaminopimelate: step 1/1. Catalyzes the stereoinversion of LL-2,6-diaminopimelate (L,L-DAP) to meso-diaminopimelate (meso-DAP), a precursor of L-lysine and an essential component of the bacterial peptidoglycan. The protein is Diaminopimelate epimerase of Rickettsia felis (strain ATCC VR-1525 / URRWXCal2) (Rickettsia azadi).